A 714-amino-acid polypeptide reads, in one-letter code: Probable metal-nicotianamine transporter YSL5 (714 aa).

Residues 17–44 (HELQETGFSPETEKVKNKNFEEDEEEED) are disordered. Residues 27-36 (ETEKVKNKNF) show a composition bias toward basic and acidic residues. A run of 13 helical transmembrane segments spans residues 67–87 (AFVV…KLNL), 90–110 (GIIP…VKTW), 135–155 (CVVA…LFGM), 175–195 (LGWI…SVVP), 236–256 (VLGK…FFTG), 295–315 (IINI…WPLI), 340–360 (VFIA…KVLS), 413–433 (IPTW…TAIL), 445–465 (ILVI…GAGL), 477–497 (LAIF…LAGL), 531–551 (FVSQ…VFWL), 593–613 (LVLC…KDSL), and 631–651 (FFLG…LFIW).

This sequence belongs to the YSL (TC 2.A.67.2) family.

Its subcellular location is the membrane. Its function is as follows. May be involved in the transport of nicotianamine-chelated metals. In Arabidopsis thaliana (Mouse-ear cress), this protein is Probable metal-nicotianamine transporter YSL5 (YSL5).